The sequence spans 213 residues: tRNA (guanine-N(7)-)-methyltransferase (213 aa).

Glu44, Glu69, Asp96, and Asp118 together coordinate S-adenosyl-L-methionine. Asp118 is an active-site residue. Residue Lys122 coordinates substrate. The tract at residues 124–129 (RHEKRR) is interaction with RNA. Residues Asp154 and 191-194 (TEYE) each bind substrate.

It belongs to the class I-like SAM-binding methyltransferase superfamily. TrmB family. In terms of assembly, homodimer.

It carries out the reaction guanosine(46) in tRNA + S-adenosyl-L-methionine = N(7)-methylguanosine(46) in tRNA + S-adenosyl-L-homocysteine. Its pathway is tRNA modification; N(7)-methylguanine-tRNA biosynthesis. Functionally, catalyzes the formation of N(7)-methylguanine at position 46 (m7G46) in tRNA. The sequence is that of tRNA (guanine-N(7)-)-methyltransferase from Bacillus subtilis (strain 168).